We begin with the raw amino-acid sequence, 340 residues long: Probable dual-specificity RNA methyltransferase RlmN (340 aa).

Catalysis depends on glutamate 93, which acts as the Proton acceptor. Positions 99–327 (TAKRLTVCVS…VSVRYSRGLE (229 aa)) constitute a Radical SAM core domain. The cysteines at positions 106 and 332 are disulfide-linked. 3 residues coordinate [4Fe-4S] cluster: cysteine 113, cysteine 117, and cysteine 120. S-adenosyl-L-methionine-binding positions include 160 to 161 (GE), serine 190, 213 to 215 (SLH), and asparagine 289. Cysteine 332 functions as the S-methylcysteine intermediate in the catalytic mechanism.

This sequence belongs to the radical SAM superfamily. RlmN family. [4Fe-4S] cluster serves as cofactor.

Its subcellular location is the cytoplasm. It carries out the reaction adenosine(2503) in 23S rRNA + 2 reduced [2Fe-2S]-[ferredoxin] + 2 S-adenosyl-L-methionine = 2-methyladenosine(2503) in 23S rRNA + 5'-deoxyadenosine + L-methionine + 2 oxidized [2Fe-2S]-[ferredoxin] + S-adenosyl-L-homocysteine. It catalyses the reaction adenosine(37) in tRNA + 2 reduced [2Fe-2S]-[ferredoxin] + 2 S-adenosyl-L-methionine = 2-methyladenosine(37) in tRNA + 5'-deoxyadenosine + L-methionine + 2 oxidized [2Fe-2S]-[ferredoxin] + S-adenosyl-L-homocysteine. Its function is as follows. Specifically methylates position 2 of adenine 2503 in 23S rRNA and position 2 of adenine 37 in tRNAs. This Rippkaea orientalis (strain PCC 8801 / RF-1) (Cyanothece sp. (strain PCC 8801)) protein is Probable dual-specificity RNA methyltransferase RlmN.